A 314-amino-acid polypeptide reads, in one-letter code: L-lactate dehydrogenase 1 (314 aa).

NAD(+)-binding positions include Val-16, Asp-37, Lys-42, Tyr-68, and 82–83; that span reads GL. Residues Gln-85, Arg-91, and 123-126 each bind substrate; that span reads NPVD. Residues 121-123 and Ser-146 contribute to the NAD(+) site; that span reads ATN. A substrate-binding site is contributed by 151–154; it reads DSAR. Beta-D-fructose 1,6-bisphosphate-binding residues include Arg-156 and His-171. Residue His-178 is the Proton acceptor of the active site. The residue at position 223 (Tyr-223) is a Phosphotyrosine. Position 232 (Thr-232) interacts with substrate.

This sequence belongs to the LDH/MDH superfamily. LDH family. In terms of assembly, homotetramer.

Its subcellular location is the cytoplasm. The catalysed reaction is (S)-lactate + NAD(+) = pyruvate + NADH + H(+). It participates in fermentation; pyruvate fermentation to lactate; (S)-lactate from pyruvate: step 1/1. With respect to regulation, allosterically activated by fructose 1,6-bisphosphate (FBP). Its function is as follows. Catalyzes the conversion of lactate to pyruvate. The chain is L-lactate dehydrogenase 1 from Bacillus cereus (strain ATCC 14579 / DSM 31 / CCUG 7414 / JCM 2152 / NBRC 15305 / NCIMB 9373 / NCTC 2599 / NRRL B-3711).